Here is a 110-residue protein sequence, read N- to C-terminus: Late cornified envelope protein 2C (110 aa).

Over residues 1–10 the composition is skewed to low complexity; that stretch reads MSCQQNQQQC. Residues 1 to 23 form a disordered region; it reads MSCQQNQQQCQPPPKCPPKCTPK. Residues 11-23 show a composition bias toward pro residues; it reads QPPPKCPPKCTPK.

This sequence belongs to the LCE family. In terms of assembly, interacts with CYSRT1; the interaction is direct. Skin-specific. Expression was readily detected in adult trunk skin, adult arm skin, fetal skin, penal skin, vulva, esophagus and tongue. Not expressed in the cervix, rectum, lung, colon, or placenta.

Its function is as follows. Precursors of the cornified envelope of the stratum. This is Late cornified envelope protein 2C (LCE2C) from Homo sapiens (Human).